Consider the following 169-residue polypeptide: S-ribosylhomocysteine lyase (169 aa).

Positions 54, 58, and 128 each coordinate Fe cation.

It belongs to the LuxS family. As to quaternary structure, homodimer. It depends on Fe cation as a cofactor.

The catalysed reaction is S-(5-deoxy-D-ribos-5-yl)-L-homocysteine = (S)-4,5-dihydroxypentane-2,3-dione + L-homocysteine. Involved in the synthesis of autoinducer 2 (AI-2) which is secreted by bacteria and is used to communicate both the cell density and the metabolic potential of the environment. The regulation of gene expression in response to changes in cell density is called quorum sensing. Catalyzes the transformation of S-ribosylhomocysteine (RHC) to homocysteine (HC) and 4,5-dihydroxy-2,3-pentadione (DPD). In Psychromonas ingrahamii (strain DSM 17664 / CCUG 51855 / 37), this protein is S-ribosylhomocysteine lyase.